Reading from the N-terminus, the 491-residue chain is MKLNELMQAIPVFTGEVSETIEISHIAQDSRKVKPGTLFICIDGEVVDGHKFASRAVELGAVAIIAEKQVDVSIPVIYVRDSKRAMAMLADYFYGSPTQALKLVGITGTNGKTTVSHLVEQIVRENGEQTGLIGTMYRKIGDQILETKNTTPDSLTLQETFRDMLLSGVSTAVMEVSSHALVQGRVYGSDYDVAVFMNLSQDHLDYHHTMEEYANAKSLLFAQLGNSYHTSNPKIAVLNADDAESVRMQKATAAHIITFGIKQEADFQASNIKITSHGSTFDLGTPVGNFTLKIKMIGNFSVYNVLAAIATSFALHIPMEKAIKTVESIPGVKGRFELVHAGQEFPVIVDYAHTPDGLLNVLETIDEFAEKRVFVVVGCGGDRDKGKRPQMAKIAVDYATNPIFTSDNPRSENPRAIIEDMIQGVPESDAYVVHENRRDAIRFAVNQAEAGDVILIAGKGHEDYQVVGDEVIDFDDRVEARIAIEKKLGLA.

Serine 30 is a UDP-N-acetyl-alpha-D-muramoyl-L-alanyl-D-glutamate binding site. 108–114 (GTNGKTT) contacts ATP. Residues asparagine 149, 150-151 (TT), serine 177, glutamine 183, and arginine 185 each bind UDP-N-acetyl-alpha-D-muramoyl-L-alanyl-D-glutamate. The residue at position 217 (lysine 217) is an N6-carboxylysine. Residues arginine 383, 407-410 (DNPR), glycine 458, and glutamate 462 contribute to the meso-2,6-diaminopimelate site. Residues 407 to 410 (DNPR) carry the Meso-diaminopimelate recognition motif motif.

This sequence belongs to the MurCDEF family. MurE subfamily. It depends on Mg(2+) as a cofactor. Carboxylation is probably crucial for Mg(2+) binding and, consequently, for the gamma-phosphate positioning of ATP.

It localises to the cytoplasm. The catalysed reaction is UDP-N-acetyl-alpha-D-muramoyl-L-alanyl-D-glutamate + meso-2,6-diaminopimelate + ATP = UDP-N-acetyl-alpha-D-muramoyl-L-alanyl-gamma-D-glutamyl-meso-2,6-diaminopimelate + ADP + phosphate + H(+). It functions in the pathway cell wall biogenesis; peptidoglycan biosynthesis. Functionally, catalyzes the addition of meso-diaminopimelic acid to the nucleotide precursor UDP-N-acetylmuramoyl-L-alanyl-D-glutamate (UMAG) in the biosynthesis of bacterial cell-wall peptidoglycan. The protein is UDP-N-acetylmuramoyl-L-alanyl-D-glutamate--2,6-diaminopimelate ligase of Listeria monocytogenes serovar 1/2a (strain ATCC BAA-679 / EGD-e).